The sequence spans 450 residues: DNA primase DnaG (450 aa).

Positions Asp199–Glu273 constitute a Toprim domain. Mg(2+) contacts are provided by Glu205, Asp247, and Asp249. Residues Ala320–Ile348 show a composition bias toward basic and acidic residues. The tract at residues Ala320 to Pro350 is disordered.

This sequence belongs to the archaeal DnaG primase family. In terms of assembly, forms a ternary complex with MCM helicase and DNA. Component of the archaeal exosome complex. It depends on Mg(2+) as a cofactor.

It carries out the reaction ssDNA + n NTP = ssDNA/pppN(pN)n-1 hybrid + (n-1) diphosphate.. Functionally, RNA polymerase that catalyzes the synthesis of short RNA molecules used as primers for DNA polymerase during DNA replication. Also part of the exosome, which is a complex involved in RNA degradation. Acts as a poly(A)-binding protein that enhances the interaction between heteromeric, adenine-rich transcripts and the exosome. The protein is DNA primase DnaG of Thermococcus gammatolerans (strain DSM 15229 / JCM 11827 / EJ3).